The primary structure comprises 233 residues: Ribosomal RNA small subunit methyltransferase G (233 aa).

S-adenosyl-L-methionine contacts are provided by residues G96, L101, 146–147 (LE), and R160.

It belongs to the methyltransferase superfamily. RNA methyltransferase RsmG family.

Its subcellular location is the cytoplasm. The catalysed reaction is guanosine(527) in 16S rRNA + S-adenosyl-L-methionine = N(7)-methylguanosine(527) in 16S rRNA + S-adenosyl-L-homocysteine. Specifically methylates the N7 position of guanine in position 527 of 16S rRNA. In Sphingopyxis alaskensis (strain DSM 13593 / LMG 18877 / RB2256) (Sphingomonas alaskensis), this protein is Ribosomal RNA small subunit methyltransferase G.